Consider the following 67-residue polypeptide: Conotoxin Cl6.6a (67 aa).

The first 24 residues, methionine 1–alanine 24, serve as a signal peptide directing secretion. Residues threonine 25–proline 37 constitute a propeptide that is removed on maturation. 3 disulfides stabilise this stretch: cysteine 43–cysteine 57, cysteine 50–cysteine 61, and cysteine 56–cysteine 65.

This sequence belongs to the conotoxin O1 superfamily. Expressed by the venom duct.

Its subcellular location is the secreted. The protein is Conotoxin Cl6.6a of Californiconus californicus (California cone).